Reading from the N-terminus, the 248-residue chain is uncharacterized protein (248 aa).

9-33 (IITGASSGIGEATAILLAEKGAKLV) serves as a coordination point for NADP(+). Residue S141 participates in substrate binding. Residue Y154 is the Proton acceptor of the active site.

It belongs to the short-chain dehydrogenases/reductases (SDR) family.

This is an uncharacterized protein from Listeria innocua serovar 6a (strain ATCC BAA-680 / CLIP 11262).